A 609-amino-acid chain; its full sequence is Proline--tRNA ligase (609 aa).

Belongs to the class-II aminoacyl-tRNA synthetase family. ProS type 1 subfamily. In terms of assembly, homodimer.

It is found in the cytoplasm. The catalysed reaction is tRNA(Pro) + L-proline + ATP = L-prolyl-tRNA(Pro) + AMP + diphosphate. Functionally, catalyzes the attachment of proline to tRNA(Pro) in a two-step reaction: proline is first activated by ATP to form Pro-AMP and then transferred to the acceptor end of tRNA(Pro). As ProRS can inadvertently accommodate and process non-cognate amino acids such as alanine and cysteine, to avoid such errors it has two additional distinct editing activities against alanine. One activity is designated as 'pretransfer' editing and involves the tRNA(Pro)-independent hydrolysis of activated Ala-AMP. The other activity is designated 'posttransfer' editing and involves deacylation of mischarged Ala-tRNA(Pro). The misacylated Cys-tRNA(Pro) is not edited by ProRS. The chain is Proline--tRNA ligase from Synechococcus sp. (strain JA-2-3B'a(2-13)) (Cyanobacteria bacterium Yellowstone B-Prime).